The chain runs to 175 residues: Crossover junction endodeoxyribonuclease RuvC (175 aa).

Active-site residues include D16, E76, and D148. Mg(2+) contacts are provided by D16, E76, and D148.

The protein belongs to the RuvC family. As to quaternary structure, homodimer which binds Holliday junction (HJ) DNA. The HJ becomes 2-fold symmetrical on binding to RuvC with unstacked arms; it has a different conformation from HJ DNA in complex with RuvA. In the full resolvosome a probable DNA-RuvA(4)-RuvB(12)-RuvC(2) complex forms which resolves the HJ. Mg(2+) serves as cofactor.

The protein resides in the cytoplasm. It carries out the reaction Endonucleolytic cleavage at a junction such as a reciprocal single-stranded crossover between two homologous DNA duplexes (Holliday junction).. In terms of biological role, the RuvA-RuvB-RuvC complex processes Holliday junction (HJ) DNA during genetic recombination and DNA repair. Endonuclease that resolves HJ intermediates. Cleaves cruciform DNA by making single-stranded nicks across the HJ at symmetrical positions within the homologous arms, yielding a 5'-phosphate and a 3'-hydroxyl group; requires a central core of homology in the junction. The consensus cleavage sequence is 5'-(A/T)TT(C/G)-3'. Cleavage occurs on the 3'-side of the TT dinucleotide at the point of strand exchange. HJ branch migration catalyzed by RuvA-RuvB allows RuvC to scan DNA until it finds its consensus sequence, where it cleaves and resolves the cruciform DNA. The sequence is that of Crossover junction endodeoxyribonuclease RuvC from Bradyrhizobium sp. (strain ORS 278).